The sequence spans 255 residues: Hydroxyacylglutathione hydrolase (255 aa).

Residues His56, His58, Asp60, His61, His114, Asp133, and His171 each coordinate Zn(2+).

It belongs to the metallo-beta-lactamase superfamily. Glyoxalase II family. Monomer. Zn(2+) is required as a cofactor.

The enzyme catalyses an S-(2-hydroxyacyl)glutathione + H2O = a 2-hydroxy carboxylate + glutathione + H(+). Its pathway is secondary metabolite metabolism; methylglyoxal degradation; (R)-lactate from methylglyoxal: step 2/2. In terms of biological role, thiolesterase that catalyzes the hydrolysis of S-D-lactoyl-glutathione to form glutathione and D-lactic acid. This chain is Hydroxyacylglutathione hydrolase, found in Rhodopseudomonas palustris (strain BisA53).